Reading from the N-terminus, the 303-residue chain is Ribosomal protein L11 methyltransferase (303 aa).

S-adenosyl-L-methionine contacts are provided by T144, G165, D187, and N235.

This sequence belongs to the methyltransferase superfamily. PrmA family.

The protein resides in the cytoplasm. The catalysed reaction is L-lysyl-[protein] + 3 S-adenosyl-L-methionine = N(6),N(6),N(6)-trimethyl-L-lysyl-[protein] + 3 S-adenosyl-L-homocysteine + 3 H(+). In terms of biological role, methylates ribosomal protein L11. This Prochlorococcus marinus (strain MIT 9301) protein is Ribosomal protein L11 methyltransferase.